A 414-amino-acid polypeptide reads, in one-letter code: Putative truncated GMC-type inactive oxidoreductase R832 (414 aa).

The signal sequence occupies residues 1 to 20 (MNPTKLFLVFVAFAFAIINA). 38-67 (DYIIVGSGPGGSRAVQQCIAKGHKCTLVER) provides a ligand contact to FAD.

It belongs to the GMC oxidoreductase family. It depends on FAD as a cofactor.

The protein is Putative truncated GMC-type inactive oxidoreductase R832 of Acanthamoeba polyphaga (Amoeba).